A 689-amino-acid chain; its full sequence is Beta-adrenergic receptor kinase 1 (689 aa).

Residues 1-190 are N-terminal; the sequence is MADLEAVLAD…ELNIHLTMND (190 aa). The RGS domain occupies 54–175; sequence TFEKIFSQKL…IESDKFTRFC (122 aa). Positions 191 to 453 constitute a Protein kinase domain; the sequence is FSVHRIIGRG…AQEVKESPFF (263 aa). Residues 197–205 and K220 each bind ATP; that span reads IGRGGFGEV. Residue D317 is the Proton acceptor of the active site. The region spanning 454-521 is the AGC-kinase C-terminal domain; that stretch reads RSLDWQMVFL…TISERWQQEV (68 aa). The PH domain occupies 558-652; it reads DCIMHGYMSK…WKKELRDAYR (95 aa). Residue S670 is modified to Phosphoserine.

Belongs to the protein kinase superfamily. AGC Ser/Thr protein kinase family. GPRK subfamily. As to quaternary structure, interacts with the heterodimer formed by GNB1 and GNG2. Interacts with GIT1. Interacts with, and phosphorylates chemokine-stimulated CCR5. Interacts with ARRB1. Interacts with LPAR1 and LPAR2. Interacts with RALA in response to LPAR1 activation. ADRBK1 and RALA mutually inhibit each other's binding to LPAR1. Interacts with ADRB2. As to expression, expressed in peripheral blood leukocytes.

Its subcellular location is the cytoplasm. The protein resides in the cell membrane. The protein localises to the postsynapse. It is found in the presynapse. It carries out the reaction [beta-adrenergic receptor] + ATP = [beta-adrenergic receptor]-phosphate + ADP + H(+). In contrast to other AGC family kinases, the catalytic activity is solely regulated by the binding of substrates and ligands, not by phosphorylation of the kinase domain. In terms of biological role, specifically phosphorylates the agonist-occupied form of the beta-adrenergic and closely related receptors, probably inducing a desensitization of them. Key regulator of LPAR1 signaling. Competes with RALA for binding to LPAR1 thus affecting the signaling properties of the receptor. Desensitizes LPAR1 and LPAR2 in a phosphorylation-independent manner. Positively regulates ciliary smoothened (SMO)-dependent Hedgehog (Hh) signaling pathway by facilitating the trafficking of SMO into the cilium and the stimulation of SMO activity. Inhibits relaxation of airway smooth muscle in response to blue light. This chain is Beta-adrenergic receptor kinase 1, found in Homo sapiens (Human).